Here is an 812-residue protein sequence, read N- to C-terminus: ATP-dependent zinc metalloprotease FtsH (812 aa).

Residues 1-21 (MPPSPPRPPKFPGSGRPESPN) are Cytoplasmic-facing. Residues 22–42 (WGVWVMVLLIVGVLAFGFFTP) traverse the membrane as a helical segment. Over 43-241 (ESFGLGPRKE…TKFKRESGSW (199 aa)) the chain is Extracellular. A helical transmembrane segment spans residues 242-262 (GGILLNLLPIVLILVILFFMF). Over 263–812 (RAQSGGARGA…EFGKDGGEKK (550 aa)) the chain is Cytoplasmic. Position 333-340 (333-340 (GAPGTGKT)) interacts with ATP. Residue H555 coordinates Zn(2+). The active site involves E556. Zn(2+) is bound by residues H559 and D631. The disordered stretch occupies residues 739–812 (KNPPARVTPP…EFGKDGGEKK (74 aa)). 2 stretches are compositionally biased toward basic and acidic residues: residues 757 to 785 (QPGKDDSGHNEKKEAEETRADGAEERKME) and 803 to 812 (EFGKDGGEKK).

In the central section; belongs to the AAA ATPase family. This sequence in the C-terminal section; belongs to the peptidase M41 family. Homohexamer. Requires Zn(2+) as cofactor.

It localises to the cell membrane. Acts as a processive, ATP-dependent zinc metallopeptidase for both cytoplasmic and membrane proteins. Plays a role in the quality control of integral membrane proteins. In Akkermansia muciniphila (strain ATCC BAA-835 / DSM 22959 / JCM 33894 / BCRC 81048 / CCUG 64013 / CIP 107961 / Muc), this protein is ATP-dependent zinc metalloprotease FtsH.